We begin with the raw amino-acid sequence, 277 residues long: Large ribosomal subunit protein uL2 (277 aa).

Disordered stretches follow at residues 35–58 and 213–277; these read QPLP…GGGH and WKGI…RKRK.

This sequence belongs to the universal ribosomal protein uL2 family. In terms of assembly, part of the 50S ribosomal subunit. Forms a bridge to the 30S subunit in the 70S ribosome.

In terms of biological role, one of the primary rRNA binding proteins. Required for association of the 30S and 50S subunits to form the 70S ribosome, for tRNA binding and peptide bond formation. It has been suggested to have peptidyltransferase activity; this is somewhat controversial. Makes several contacts with the 16S rRNA in the 70S ribosome. The sequence is that of Large ribosomal subunit protein uL2 from Staphylococcus carnosus (strain TM300).